The primary structure comprises 377 residues: MMTIRNSHPLIKIVNNSLVDLPAPINISTWWNFGSLLGLCLITQIMTGLFLAMHYTSDIASAFNSIVHIMRDVNNGWLIRIIHANGASLFFICLYLHTGRNIYYNSFNQISTWTMGVILMFLVMGTAFMGYVLPWGQMSFWGATVITNLLSAIPYLGNFLVQWVWGGFAVSNPTLTRFFMIHFLLPFLIIGGLLVHLLFLHQTGSNNPLGLNSNQDKIPFHPLFSYKDLVGVLIIMSGLLLLSLLSPFLLGDAENFYPANPLVTPVHIQPEWYFLFAYAILRSIPNKLGGVIALVLSVSILFILPLSSKFKMQGNQFYPFNQIMFWVFINLVIMLTWIGARPVEEPFIIMGQTLTCSYFMYFILNPMISYLWDYNLN.

4 helical membrane passes run 33-53, 77-98, 113-133, and 178-198; these read FGSLLGLCLITQIMTGLFLAM, WLIRIIHANGASLFFICLYLHT, WTMGVILMFLVMGTAFMGYVL, and FFMIHFLLPFLIIGGLLVHLL. 2 residues coordinate heme b: His83 and His97. Positions 182 and 196 each coordinate heme b. Residue His201 participates in a ubiquinone binding. Transmembrane regions (helical) follow at residues 226 to 246, 288 to 308, 320 to 340, and 347 to 367; these read YKDLVGVLIIMSGLLLLSLLS, LGGVIALVLSVSILFILPLSS, FNQIMFWVFINLVIMLTWIGA, and FIIMGQTLTCSYFMYFILNPM.

This sequence belongs to the cytochrome b family. In terms of assembly, the main subunits of complex b-c1 are: cytochrome b, cytochrome c1 and the Rieske protein. Heme b serves as cofactor.

It is found in the mitochondrion inner membrane. In terms of biological role, component of the ubiquinol-cytochrome c reductase complex (complex III or cytochrome b-c1 complex) that is part of the mitochondrial respiratory chain. The b-c1 complex mediates electron transfer from ubiquinol to cytochrome c. Contributes to the generation of a proton gradient across the mitochondrial membrane that is then used for ATP synthesis. This chain is Cytochrome b (MT-CYB), found in Tetrodontophora bielanensis (Giant springtail).